Reading from the N-terminus, the 73-residue chain is Protein SlyX homolog (73 aa).

Belongs to the SlyX family.

In Actinobacillus pleuropneumoniae serotype 5b (strain L20), this protein is Protein SlyX homolog.